The sequence spans 428 residues: Flotillin-2 (428 aa).

The N-myristoyl glycine moiety is linked to residue G2. C4 carries the S-palmitoyl cysteine; by ZDHHC5 lipid modification. C19 is lipidated: S-palmitoyl cysteine. C20 carries the S-palmitoyl cysteine; by ZDHHC5 lipid modification. Phosphoserine is present on S405.

This sequence belongs to the band 7/mec-2 family. Flotillin subfamily. Heterooligomeric complex of flotillin-1 and flotillin-2 and caveolin-1 and caveolin-2. Interacts with ECPAS. In terms of processing, ZDHHC5-catalyzed palmitoylation may be required for the formation of higher-order complexes and for neurite outgrowth in cultured neural stem cells.

It localises to the cell membrane. It is found in the membrane. The protein localises to the caveola. Its subcellular location is the endosome. May act as a scaffolding protein within caveolar membranes, functionally participating in formation of caveolae or caveolae-like vesicles. May be involved in epidermal cell adhesion and epidermal structure and function. This is Flotillin-2 (FLOT2) from Bos taurus (Bovine).